The primary structure comprises 335 residues: MSSSTHTNFKQYLAAVKPQGEAAPAGLQELLIAVTQTCSTLSHEVAQGALIGLLGSAGTGNVQGEVQQKLDIIANDLLIEGVQGCKSLAGLASEEMELPVPVQGTGDYLLLFDPLDGSSNIDVNVSIGTIFSILKKQDPQAPLQTADFLLSGRHQVAAGYVVYGPQTTMALTLGDGVVMFTLNKVTGEFLLIKDAVTIAHSTKEFAINMSNMRHWADPVKRYVEECLAGVGGAREKDFNMRWIASMVADVHRVLSRGGVFMYPWDQREPHKPGKLRLMYEANPMSFLVEQAGGASTNGTQLIMDLQPTDLHERVSVMLGSKEEIDRLQHYHSSLA.

Residues Glu-94, Asp-113, Leu-115, and Asp-116 each contribute to the Mg(2+) site. Residues 116–119 (DGSS), Asn-208, and Lys-274 contribute to the substrate site. Glu-280 provides a ligand contact to Mg(2+).

Belongs to the FBPase class 1 family. Homotetramer. Mg(2+) is required as a cofactor.

The protein localises to the cytoplasm. The enzyme catalyses beta-D-fructose 1,6-bisphosphate + H2O = beta-D-fructose 6-phosphate + phosphate. The protein operates within carbohydrate biosynthesis; gluconeogenesis. This Polynucleobacter asymbioticus (strain DSM 18221 / CIP 109841 / QLW-P1DMWA-1) (Polynucleobacter necessarius subsp. asymbioticus) protein is Fructose-1,6-bisphosphatase class 1.